We begin with the raw amino-acid sequence, 132 residues long: Large ribosomal subunit protein bL12 (132 aa).

A compositionally biased stretch (basic and acidic residues) spans 100–126; that stretch reads ESTPKPVKEGASKEDAEAAKKELEEAG. Positions 100–132 are disordered; sequence ESTPKPVKEGASKEDAEAAKKELEEAGAKVSIK.

Belongs to the bacterial ribosomal protein bL12 family. As to quaternary structure, homodimer. Part of the ribosomal stalk of the 50S ribosomal subunit. Forms a multimeric L10(L12)X complex, where L10 forms an elongated spine to which 2 to 4 L12 dimers bind in a sequential fashion. Binds GTP-bound translation factors.

Its function is as follows. Forms part of the ribosomal stalk which helps the ribosome interact with GTP-bound translation factors. Is thus essential for accurate translation. This chain is Large ribosomal subunit protein bL12, found in Thermosynechococcus vestitus (strain NIES-2133 / IAM M-273 / BP-1).